The sequence spans 115 residues: Large ribosomal subunit protein bL20 (115 aa).

It belongs to the bacterial ribosomal protein bL20 family.

Binds directly to 23S ribosomal RNA and is necessary for the in vitro assembly process of the 50S ribosomal subunit. It is not involved in the protein synthesizing functions of that subunit. This is Large ribosomal subunit protein bL20 from Borrelia duttonii (strain Ly).